The sequence spans 238 residues: tRNA (guanine-N(1)-)-methyltransferase (238 aa).

Residues Gly-110 and Leu-129–Leu-134 each bind S-adenosyl-L-methionine.

This sequence belongs to the RNA methyltransferase TrmD family. As to quaternary structure, homodimer.

The protein resides in the cytoplasm. It carries out the reaction guanosine(37) in tRNA + S-adenosyl-L-methionine = N(1)-methylguanosine(37) in tRNA + S-adenosyl-L-homocysteine + H(+). Its function is as follows. Specifically methylates guanosine-37 in various tRNAs. This is tRNA (guanine-N(1)-)-methyltransferase from Clostridium botulinum (strain Alaska E43 / Type E3).